The chain runs to 315 residues: Ribosomal RNA small subunit methyltransferase H (315 aa).

Residues 37–39 (GGH), Asp57, Asp105, and Gln112 contribute to the S-adenosyl-L-methionine site.

It belongs to the methyltransferase superfamily. RsmH family.

It is found in the cytoplasm. The enzyme catalyses cytidine(1402) in 16S rRNA + S-adenosyl-L-methionine = N(4)-methylcytidine(1402) in 16S rRNA + S-adenosyl-L-homocysteine + H(+). Its function is as follows. Specifically methylates the N4 position of cytidine in position 1402 (C1402) of 16S rRNA. The polypeptide is Ribosomal RNA small subunit methyltransferase H (Nitrosococcus oceani (strain ATCC 19707 / BCRC 17464 / JCM 30415 / NCIMB 11848 / C-107)).